Here is a 404-residue protein sequence, read N- to C-terminus: Homocysteine-responsive endoplasmic reticulum-resident ubiquitin-like domain member 2 protein (404 aa).

A Ubiquitin-like domain is found at 10-89 (VTLIIKAPNQ…HMVHLVCASR (80 aa)). Residues 86–153 (CASRSPPSSP…TLSQAQTDPA (68 aa)) are disordered. Low complexity-rich tracts occupy residues 88 to 97 (SRSPPSSPKS) and 109 to 126 (SSTSSNSDHSDSTTPSPS). Polar residues predominate over residues 127–153 (QESLSLVTGSSEGLRQRTLSQAQTDPA). A helical transmembrane segment spans residues 301-321 (FIMVMGAMLLVYLHQAGWFPF).

Its subcellular location is the membrane. Could be involved in the unfolded protein response (UPR) pathway. The protein is Homocysteine-responsive endoplasmic reticulum-resident ubiquitin-like domain member 2 protein (Herpud2) of Mus musculus (Mouse).